We begin with the raw amino-acid sequence, 551 residues long: Synapse-associated protein of 47 kDa (551 aa).

Disordered stretches follow at residues 20-72 and 117-198; these read AGDE…AGKR and AMPA…GQGK. Composition is skewed to low complexity over residues 26-59, 117-128, and 137-146; these read PAPTGDAPAAAPAASTSVEATASSAVDPEAAAAA, AMPAMPSIPSIP, and DGAEGAEGAV. A phosphoserine mark is found at Ser178 and Ser182. A compositionally biased stretch (gly residues) spans 182-197; it reads SGGGTPTGDEGQIGQG. A Phosphothreonine modification is found at Thr186. The region spanning 295–347 is the BSD domain; the sequence is VDFEFSYDTAYPTAIAIMAEDKALETMRFELVPKIITEENFWRNYFYRVSLII. A disordered region spans residues 360 to 391; that stretch reads VGQASSGEDANEVATKEKKSKTAEPAKGDSSV. Residues 373–386 are compositionally biased toward basic and acidic residues; the sequence is ATKEKKSKTAEPAK. The residue at position 433 (Ser433) is a Phosphoserine. Positions 487 to 551 are disordered; sequence KDYEVVDEGG…DLIEDTDDLK (65 aa). The span at 514–523 shows a compositional bias: acidic residues; it reads DDTEADEDEP. Residues 524–535 show a composition bias toward polar residues; sequence TISNLRTRSTNN. At Thr530 the chain carries Phosphothreonine. A compositionally biased stretch (acidic residues) spans 536–551; that stretch reads DWEEYADLIEDTDDLK.

Expressed specifically in neurons and transported to synaptic terminals.

In Drosophila melanogaster (Fruit fly), this protein is Synapse-associated protein of 47 kDa (Sap47).